We begin with the raw amino-acid sequence, 187 residues long: 1,6-anhydro-N-acetylmuramyl-L-alanine amidase AmpD (187 aa).

The region spanning 30 to 167 (LLVVHNISLP…APERKTDPGP (138 aa)) is the N-acetylmuramoyl-L-alanine amidase domain. Zn(2+) is bound at residue His34. The active-site Proton acceptor is the Glu116. 2 residues coordinate Zn(2+): His154 and Asp164.

This sequence belongs to the N-acetylmuramoyl-L-alanine amidase 2 family. Zn(2+) serves as cofactor.

It localises to the cytoplasm. The catalysed reaction is Hydrolyzes the link between N-acetylmuramoyl residues and L-amino acid residues in certain cell-wall glycopeptides.. With respect to regulation, amidase activity is inhibited by metal chelators such as EDTA, dipicolinic acid or 1,10-phenanthroline. Its function is as follows. Involved in cell wall peptidoglycan recycling. Specifically cleaves the amide bond between the lactyl group of N-acetylmuramic acid and the alpha-amino group of the L-alanine in degradation products containing an anhydro N-acetylmuramyl moiety. Is also involved in beta-lactamase induction. The polypeptide is 1,6-anhydro-N-acetylmuramyl-L-alanine amidase AmpD (Citrobacter freundii).